Here is a 63-residue protein sequence, read N- to C-terminus: uncharacterized protein (63 aa).

This is an uncharacterized protein from Bacillus subtilis (strain 168).